Consider the following 997-residue polypeptide: DNA polymerase I (997 aa).

Residues 174–261 (VMPTQLLDLF…VPCVFSLEDS (88 aa)) form the 5'-3' exonuclease domain. The region spanning 428–589 (VPDVSLHTES…LYHYLKLRLE (162 aa)) is the 3'-5' exonuclease domain.

It belongs to the DNA polymerase type-A family.

The catalysed reaction is DNA(n) + a 2'-deoxyribonucleoside 5'-triphosphate = DNA(n+1) + diphosphate. In terms of biological role, in addition to polymerase activity, this DNA polymerase exhibits 3'-5' and 5'-3' exonuclease activity. The protein is DNA polymerase I (polA) of Treponema pallidum (strain Nichols).